Consider the following 751-residue polypeptide: Cyanobacterial phytochrome B (751 aa).

Cys17 is an a tetrapyrrole binding site. Positions 22-511 are chromophore binding domain; that stretch reads IHIPGLIQPH…RSAIIGIVLQ (490 aa). Residues 152-320 form the GAF domain; the sequence is TTTEISQILA…MTSVEMSAKE (169 aa). Positions 536 to 751 constitute a Histidine kinase domain; the sequence is IASHDLKEPL…STFYFTLQDV (216 aa). A Phosphohistidine; by autocatalysis modification is found at His539.

The protein in the N-terminal section; belongs to the phytochrome family. Contains one covalently linked tetrapyrrole chromophore.

The catalysed reaction is ATP + protein L-histidine = ADP + protein N-phospho-L-histidine.. In terms of biological role, photoreceptor which exists in two forms that are reversibly interconvertible by light: the R form that absorbs maximally in the red region of the spectrum and the FR form that absorbs maximally in the far-red region. In Nostoc sp. (strain PCC 7120 / SAG 25.82 / UTEX 2576), this protein is Cyanobacterial phytochrome B (bphB).